Here is a 235-residue protein sequence, read N- to C-terminus: Leucyl/phenylalanyl-tRNA--protein transferase (235 aa).

Belongs to the L/F-transferase family.

The protein resides in the cytoplasm. The catalysed reaction is N-terminal L-lysyl-[protein] + L-leucyl-tRNA(Leu) = N-terminal L-leucyl-L-lysyl-[protein] + tRNA(Leu) + H(+). It catalyses the reaction N-terminal L-arginyl-[protein] + L-leucyl-tRNA(Leu) = N-terminal L-leucyl-L-arginyl-[protein] + tRNA(Leu) + H(+). It carries out the reaction L-phenylalanyl-tRNA(Phe) + an N-terminal L-alpha-aminoacyl-[protein] = an N-terminal L-phenylalanyl-L-alpha-aminoacyl-[protein] + tRNA(Phe). Its function is as follows. Functions in the N-end rule pathway of protein degradation where it conjugates Leu, Phe and, less efficiently, Met from aminoacyl-tRNAs to the N-termini of proteins containing an N-terminal arginine or lysine. The chain is Leucyl/phenylalanyl-tRNA--protein transferase from Magnetococcus marinus (strain ATCC BAA-1437 / JCM 17883 / MC-1).